The following is a 299-amino-acid chain: N-acetylmuramic acid 6-phosphate etherase (299 aa).

Positions 54 to 217 (TIAQYKKGGR…STITMVGVGK (164 aa)) constitute an SIS domain. Glutamate 82 acts as the Proton donor in catalysis. Residue glutamate 113 is part of the active site.

The protein belongs to the GCKR-like family. MurNAc-6-P etherase subfamily. In terms of assembly, homodimer.

It catalyses the reaction N-acetyl-D-muramate 6-phosphate + H2O = N-acetyl-D-glucosamine 6-phosphate + (R)-lactate. The protein operates within amino-sugar metabolism; N-acetylmuramate degradation. In terms of biological role, specifically catalyzes the cleavage of the D-lactyl ether substituent of MurNAc 6-phosphate, producing GlcNAc 6-phosphate and D-lactate. The chain is N-acetylmuramic acid 6-phosphate etherase from Staphylococcus aureus (strain bovine RF122 / ET3-1).